Consider the following 205-residue polypeptide: Delta-aminolevulinic acid dehydratase (205 aa).

Cysteine 117, cysteine 119, and cysteine 127 together coordinate Zn(2+). The active-site Schiff-base intermediate with substrate is lysine 192. Arginine 202 is a substrate binding site.

The protein belongs to the ALAD family. In terms of assembly, homooctamer. Zn(2+) is required as a cofactor.

The enzyme catalyses 2 5-aminolevulinate = porphobilinogen + 2 H2O + H(+). Its pathway is porphyrin-containing compound metabolism; protoporphyrin-IX biosynthesis; coproporphyrinogen-III from 5-aminolevulinate: step 1/4. Catalyzes an early step in the biosynthesis of tetrapyrroles. Binds two molecules of 5-aminolevulinate per subunit, each at a distinct site, and catalyzes their condensation to form porphobilinogen. This is Delta-aminolevulinic acid dehydratase (hemB) from Ruminiclostridium josui (Clostridium josui).